The primary structure comprises 361 residues: Phosphate acyltransferase (361 aa).

Belongs to the PlsX family. Homodimer. Probably interacts with PlsY.

The protein resides in the cytoplasm. The enzyme catalyses a fatty acyl-[ACP] + phosphate = an acyl phosphate + holo-[ACP]. It functions in the pathway lipid metabolism; phospholipid metabolism. Its function is as follows. Catalyzes the reversible formation of acyl-phosphate (acyl-PO(4)) from acyl-[acyl-carrier-protein] (acyl-ACP). This enzyme utilizes acyl-ACP as fatty acyl donor, but not acyl-CoA. The chain is Phosphate acyltransferase from Anaeromyxobacter dehalogenans (strain 2CP-C).